Here is a 998-residue protein sequence, read N- to C-terminus: Regulator of telomere elongation helicase 1 homolog (998 aa).

The 318-residue stretch at 7-324 (AGIPVHFPFE…KEMLLELEKA (318 aa)) folds into the Helicase ATP-binding domain. An ATP-binding site is contributed by 42–49 (SPTGTGKT). The [4Fe-4S] cluster site is built by C148, C166, C175, and C211. The DEAH box signature appears at 254–257 (DEAH). The interval 426–454 (QNAGKPAPKQQQQGGWLGKGNNTSNSSSS) is disordered. A Phosphothreonine modification is found at T887.

Belongs to the helicase family. RAD3/XPD subfamily.

Its subcellular location is the nucleus. It carries out the reaction ATP + H2O = ADP + phosphate + H(+). Its function is as follows. A probable ATP-dependent DNA helicase implicated in DNA repair and the maintenance of genomic stability. Acts as an anti-recombinase to counteract toxic recombination and limit crossover during meiosis. Regulates meiotic recombination and crossover homeostasis by physically dissociating strand invasion events and thereby promotes noncrossover repair by meiotic synthesis dependent strand annealing (SDSA) as well as disassembly of D loop recombination intermediates. The polypeptide is Regulator of telomere elongation helicase 1 homolog (Drosophila willistoni (Fruit fly)).